The chain runs to 109 residues: UPF0060 membrane protein PA3275 (109 aa).

4 helical membrane passes run 5 to 25 (FWFV…YLWL), 27 to 47 (LGKS…FALL), 59 to 79 (AYAA…AFVE), and 84 to 104 (LWSD…VLFG).

Belongs to the UPF0060 family.

The protein resides in the cell inner membrane. The polypeptide is UPF0060 membrane protein PA3275 (Pseudomonas aeruginosa (strain ATCC 15692 / DSM 22644 / CIP 104116 / JCM 14847 / LMG 12228 / 1C / PRS 101 / PAO1)).